A 153-amino-acid polypeptide reads, in one-letter code: Nucleoside diphosphate kinase (153 aa).

Residues K11, F59, R87, T93, R104, and N114 each contribute to the ATP site. The Pros-phosphohistidine intermediate role is filled by H117.

Belongs to the NDK family. Mg(2+) serves as cofactor.

It carries out the reaction a 2'-deoxyribonucleoside 5'-diphosphate + ATP = a 2'-deoxyribonucleoside 5'-triphosphate + ADP. The catalysed reaction is a ribonucleoside 5'-diphosphate + ATP = a ribonucleoside 5'-triphosphate + ADP. Functionally, major role in the synthesis of nucleoside triphosphates other than ATP. The ATP gamma phosphate is transferred to the NDP beta phosphate via a ping-pong mechanism, using a phosphorylated active-site intermediate. The chain is Nucleoside diphosphate kinase (swoH) from Emericella nidulans (strain FGSC A4 / ATCC 38163 / CBS 112.46 / NRRL 194 / M139) (Aspergillus nidulans).